The following is a 268-amino-acid chain: Probable RNA methyltransferase C2A9.10 (268 aa).

Positions 23–258 (DPRLKCLPDS…RTMYIYKKKG (236 aa)) constitute a Bin3-type SAM domain.

This sequence belongs to the methyltransferase superfamily.

In terms of biological role, probable RNA methyltransferase. This chain is Probable RNA methyltransferase C2A9.10, found in Schizosaccharomyces pombe (strain 972 / ATCC 24843) (Fission yeast).